Here is a 1038-residue protein sequence, read N- to C-terminus: Isoleucine--tRNA ligase (1038 aa).

The 'HIGH' region motif lies at 48–58 (PTANGKPHVGH). The short motif at 590 to 594 (KMSKS) is the 'KMSKS' region element. Position 593 (K593) interacts with ATP.

The protein belongs to the class-I aminoacyl-tRNA synthetase family. IleS type 2 subfamily. As to quaternary structure, monomer. Zn(2+) is required as a cofactor.

It is found in the cytoplasm. The catalysed reaction is tRNA(Ile) + L-isoleucine + ATP = L-isoleucyl-tRNA(Ile) + AMP + diphosphate. In terms of biological role, catalyzes the attachment of isoleucine to tRNA(Ile). As IleRS can inadvertently accommodate and process structurally similar amino acids such as valine, to avoid such errors it has two additional distinct tRNA(Ile)-dependent editing activities. One activity is designated as 'pretransfer' editing and involves the hydrolysis of activated Val-AMP. The other activity is designated 'posttransfer' editing and involves deacylation of mischarged Val-tRNA(Ile). The sequence is that of Isoleucine--tRNA ligase from Clostridium novyi (strain NT).